The sequence spans 671 residues: DNA ligase (671 aa).

NAD(+) is bound by residues 32–36 (DAEYD), 81–82 (SL), and Glu-113. Residue Lys-115 is the N6-AMP-lysine intermediate of the active site. Residues Arg-136, Glu-173, Lys-290, and Lys-314 each coordinate NAD(+). Cys-408, Cys-411, Cys-426, and Cys-432 together coordinate Zn(2+). Positions 593–671 (EIDSPFAGKT…EAEMIRLLGA (79 aa)) constitute a BRCT domain.

This sequence belongs to the NAD-dependent DNA ligase family. LigA subfamily. It depends on Mg(2+) as a cofactor. The cofactor is Mn(2+).

The catalysed reaction is NAD(+) + (deoxyribonucleotide)n-3'-hydroxyl + 5'-phospho-(deoxyribonucleotide)m = (deoxyribonucleotide)n+m + AMP + beta-nicotinamide D-nucleotide.. Functionally, DNA ligase that catalyzes the formation of phosphodiester linkages between 5'-phosphoryl and 3'-hydroxyl groups in double-stranded DNA using NAD as a coenzyme and as the energy source for the reaction. It is essential for DNA replication and repair of damaged DNA. In Salmonella dublin (strain CT_02021853), this protein is DNA ligase.